A 335-amino-acid polypeptide reads, in one-letter code: GTPase Obg (335 aa).

The 158-residue stretch at 1–158 folds into the Obg domain; that stretch reads MFVDQITLEL…RLVELELKLI (158 aa). Positions 159–334 constitute an OBG-type G domain; it reads ADIGLVGFPN…LHDLFKSKLS (176 aa). GTP is bound by residues 165–172, 190–194, 215–218, 285–288, and 315–317; these read GFPNAGKS, FTTLH, DIPG, NKID, and SGL. Residues Ser172 and Thr192 each contribute to the Mg(2+) site.

This sequence belongs to the TRAFAC class OBG-HflX-like GTPase superfamily. OBG GTPase family. In terms of assembly, monomer. Requires Mg(2+) as cofactor.

It is found in the cytoplasm. In terms of biological role, an essential GTPase which binds GTP, GDP and possibly (p)ppGpp with moderate affinity, with high nucleotide exchange rates and a fairly low GTP hydrolysis rate. Plays a role in control of the cell cycle, stress response, ribosome biogenesis and in those bacteria that undergo differentiation, in morphogenesis control. This Chlamydia muridarum (strain MoPn / Nigg) protein is GTPase Obg.